The primary structure comprises 1442 residues: DNA polymerase III PolC-type (1442 aa).

One can recognise an Exonuclease domain in the interval 426–582; it reads YVVFDVETTG…YDTEATAYIF (157 aa).

This sequence belongs to the DNA polymerase type-C family. PolC subfamily.

The protein resides in the cytoplasm. It carries out the reaction DNA(n) + a 2'-deoxyribonucleoside 5'-triphosphate = DNA(n+1) + diphosphate. Functionally, required for replicative DNA synthesis. This DNA polymerase also exhibits 3' to 5' exonuclease activity. The polypeptide is DNA polymerase III PolC-type (Staphylococcus epidermidis (strain ATCC 12228 / FDA PCI 1200)).